Here is a 424-residue protein sequence, read N- to C-terminus: Enolase (424 aa).

Residue glutamine 165 participates in (2R)-2-phosphoglycerate binding. Glutamate 207 functions as the Proton donor in the catalytic mechanism. Aspartate 244, glutamate 283, and aspartate 310 together coordinate Mg(2+). Positions 335, 364, 365, and 386 each coordinate (2R)-2-phosphoglycerate. The active-site Proton acceptor is the lysine 335.

The protein belongs to the enolase family. It depends on Mg(2+) as a cofactor.

It is found in the cytoplasm. The protein resides in the secreted. It localises to the cell surface. It catalyses the reaction (2R)-2-phosphoglycerate = phosphoenolpyruvate + H2O. The protein operates within carbohydrate degradation; glycolysis; pyruvate from D-glyceraldehyde 3-phosphate: step 4/5. Catalyzes the reversible conversion of 2-phosphoglycerate (2-PG) into phosphoenolpyruvate (PEP). It is essential for the degradation of carbohydrates via glycolysis. In Chlamydia muridarum (strain MoPn / Nigg), this protein is Enolase.